Here is a 192-residue protein sequence, read N- to C-terminus: Peptidyl-tRNA hydrolase (192 aa).

Tyr-17 provides a ligand contact to tRNA. His-22 serves as the catalytic Proton acceptor. TRNA contacts are provided by Tyr-68, Asn-70, and Asn-116.

It belongs to the PTH family. Monomer.

The protein localises to the cytoplasm. The enzyme catalyses an N-acyl-L-alpha-aminoacyl-tRNA + H2O = an N-acyl-L-amino acid + a tRNA + H(+). Its function is as follows. Hydrolyzes ribosome-free peptidyl-tRNAs (with 1 or more amino acids incorporated), which drop off the ribosome during protein synthesis, or as a result of ribosome stalling. Functionally, catalyzes the release of premature peptidyl moieties from peptidyl-tRNA molecules trapped in stalled 50S ribosomal subunits, and thus maintains levels of free tRNAs and 50S ribosomes. This Mycolicibacterium gilvum (strain PYR-GCK) (Mycobacterium gilvum (strain PYR-GCK)) protein is Peptidyl-tRNA hydrolase.